The chain runs to 364 residues: Chorismate synthase (364 aa).

The disordered stretch occupies residues 41-60; it reads MQHDLDRRRPGTSRYTTARR. Residues arginine 48 and arginine 54 each coordinate NADP(+). FMN-binding positions include 125–127, 238–239, glycine 278, 293–297, and arginine 319; these read RSS, NA, and KPTSS.

Belongs to the chorismate synthase family. Homotetramer. FMNH2 serves as cofactor.

It catalyses the reaction 5-O-(1-carboxyvinyl)-3-phosphoshikimate = chorismate + phosphate. It participates in metabolic intermediate biosynthesis; chorismate biosynthesis; chorismate from D-erythrose 4-phosphate and phosphoenolpyruvate: step 7/7. Catalyzes the anti-1,4-elimination of the C-3 phosphate and the C-6 proR hydrogen from 5-enolpyruvylshikimate-3-phosphate (EPSP) to yield chorismate, which is the branch point compound that serves as the starting substrate for the three terminal pathways of aromatic amino acid biosynthesis. This reaction introduces a second double bond into the aromatic ring system. The protein is Chorismate synthase of Shewanella sp. (strain MR-4).